The following is a 122-amino-acid chain: Large ribosomal subunit protein uL18 (122 aa).

The protein belongs to the universal ribosomal protein uL18 family. Part of the 50S ribosomal subunit; part of the 5S rRNA/L5/L18/L25 subcomplex. Contacts the 5S and 23S rRNAs.

Its function is as follows. This is one of the proteins that bind and probably mediate the attachment of the 5S RNA into the large ribosomal subunit, where it forms part of the central protuberance. The protein is Large ribosomal subunit protein uL18 of Dictyoglomus thermophilum (strain ATCC 35947 / DSM 3960 / H-6-12).